The primary structure comprises 158 residues: Transcription elongation factor GreA (158 aa).

The stretch at 49–73 forms a coiled coil; it reads QAAREQQGFIEGRIKEIEAKLANAQ.

This sequence belongs to the GreA/GreB family.

Its function is as follows. Necessary for efficient RNA polymerase transcription elongation past template-encoded arresting sites. The arresting sites in DNA have the property of trapping a certain fraction of elongating RNA polymerases that pass through, resulting in locked ternary complexes. Cleavage of the nascent transcript by cleavage factors such as GreA or GreB allows the resumption of elongation from the new 3'terminus. GreA releases sequences of 2 to 3 nucleotides. This is Transcription elongation factor GreA from Methylococcus capsulatus (strain ATCC 33009 / NCIMB 11132 / Bath).